Consider the following 246-residue polypeptide: V-type proton ATPase subunit D 1 (246 aa).

Belongs to the V-ATPase D subunit family. V-ATPase is a heteromultimeric enzyme made up of two complexes: the ATP-hydrolytic V1 complex and the proton translocation V0 complex. The V1 complex consists of three catalytic AB heterodimers that form a heterohexamer, three peripheral stalks each consisting of EG heterodimers, one central rotor including subunits D and F, and the regulatory subunits C and H. The proton translocation complex V0 consists of the proton transport subunit a, a ring of proteolipid subunits c9c'', rotary subunit d, subunits e and f, and the accessory subunits VhaAC45 and ATP6AP2.

In terms of biological role, subunit of the V1 complex of vacuolar(H+)-ATPase (V-ATPase), a multisubunit enzyme composed of a peripheral complex (V1) that hydrolyzes ATP and a membrane integral complex (V0) that translocates protons. V-ATPase is responsible for acidifying and maintaining the pH of intracellular compartments and in some cell types, is targeted to the plasma membrane, where it is responsible for acidifying the extracellular environment. The polypeptide is V-type proton ATPase subunit D 1 (Vha36-1) (Drosophila melanogaster (Fruit fly)).